We begin with the raw amino-acid sequence, 100 residues long: Small ubiquitin-related modifier 1 (100 aa).

Over residues 1–12 (MSANQEEDKKPG) the composition is skewed to basic and acidic residues. Residues 1 to 21 (MSANQEEDKKPGDGGAHINLK) are disordered. The Ubiquitin-like domain occupies 16 to 93 (AHINLKVKGQ…IDAMLHQTGG (78 aa)). Gly-93 is covalently cross-linked (Glycyl lysine isopeptide (Gly-Lys) (interchain with K-? in acceptor proteins)).

This sequence belongs to the ubiquitin family. SUMO subfamily. In terms of assembly, interacts with SAE2, SCE1, SIZ1 and MMS21. Interacts with HSFA2. Covalently attached to ABI5, FLD, GTE3, HSFA2 and ICE1.

It localises to the nucleus. The protein resides in the cytoplasm. Functionally, ubiquitin-like protein which can be covalently attached to target lysines as a monomer. Does not seem to be involved in protein degradation and may function as an antagonist of ubiquitin in the degradation process. Required for the massive protein sumoylation in the nucleus induced by heat shock and controlled by SIZ1. Involved in the regulation of the heat stress transcription factor HSFA2 in acquired thermotolerance. The protein is Small ubiquitin-related modifier 1 of Arabidopsis thaliana (Mouse-ear cress).